Here is a 365-residue protein sequence, read N- to C-terminus: Chorismate synthase (365 aa).

R48 and R54 together coordinate NADP(+). FMN contacts are provided by residues 125-127 (RSS), 238-239 (NA), G278, 293-297 (KPTSS), and R319.

The protein belongs to the chorismate synthase family. Homotetramer. Requires FMNH2 as cofactor.

The catalysed reaction is 5-O-(1-carboxyvinyl)-3-phosphoshikimate = chorismate + phosphate. It participates in metabolic intermediate biosynthesis; chorismate biosynthesis; chorismate from D-erythrose 4-phosphate and phosphoenolpyruvate: step 7/7. In terms of biological role, catalyzes the anti-1,4-elimination of the C-3 phosphate and the C-6 proR hydrogen from 5-enolpyruvylshikimate-3-phosphate (EPSP) to yield chorismate, which is the branch point compound that serves as the starting substrate for the three terminal pathways of aromatic amino acid biosynthesis. This reaction introduces a second double bond into the aromatic ring system. The chain is Chorismate synthase from Vesicomyosocius okutanii subsp. Calyptogena okutanii (strain HA).